Reading from the N-terminus, the 196-residue chain is Potassium-transporting ATPase KdpC subunit (196 aa).

A helical membrane pass occupies residues 7-27 (PAIVSAGLFTVLLGLAYPLAV).

The protein belongs to the KdpC family. In terms of assembly, the system is composed of three essential subunits: KdpA, KdpB and KdpC.

The protein localises to the cell inner membrane. In terms of biological role, part of the high-affinity ATP-driven potassium transport (or Kdp) system, which catalyzes the hydrolysis of ATP coupled with the electrogenic transport of potassium into the cytoplasm. This subunit acts as a catalytic chaperone that increases the ATP-binding affinity of the ATP-hydrolyzing subunit KdpB by the formation of a transient KdpB/KdpC/ATP ternary complex. This Caulobacter sp. (strain K31) protein is Potassium-transporting ATPase KdpC subunit.